The following is a 428-amino-acid chain: Maltoporin 1 (428 aa).

An N-terminal signal peptide occupies residues 1-25 (MTMKVKLLTTSVALALSMTAFSSNA).

Belongs to the porin LamB (TC 1.B.3) family. Homotrimer formed of three 18-stranded antiparallel beta-barrels, containing three independent channels.

The protein resides in the cell outer membrane. The enzyme catalyses beta-maltose(in) = beta-maltose(out). In terms of biological role, involved in the transport of maltose and maltodextrins. The polypeptide is Maltoporin 1 (Aeromonas salmonicida (strain A449)).